Reading from the N-terminus, the 312-residue chain is MEDFHHISVLPDEVLQALSPRSGGVYVDGTLGGAGHAGLILTASAPDGQLIGFDRDEEAIAVARERLQVFGGRVRIIHRNFAGIAQALAEIGVDGIDGFVLDLGVSSHQLDRDERGFSFMHDAPLDMRMDRSSGQSAADLVNTLPEGELYRIISEYGEERWAKRVASFIVKARDERPIETTLQLVDVIKGSIPKAKWEERLHPATRTFQALRIAVNEELKSLEEGLEGLLSLLKQGGRGAVISFHSLEDRIVKEGFRAAATGCTCPKELPICICGRVPRFKLVTRKPITAGEAEVAANPRSRSAKLRVVEKI.

S-adenosyl-L-methionine contacts are provided by residues Ala-34–His-36, Asp-54, Phe-81, Asp-102, and Gln-109.

The protein belongs to the methyltransferase superfamily. RsmH family.

The protein resides in the cytoplasm. It catalyses the reaction cytidine(1402) in 16S rRNA + S-adenosyl-L-methionine = N(4)-methylcytidine(1402) in 16S rRNA + S-adenosyl-L-homocysteine + H(+). In terms of biological role, specifically methylates the N4 position of cytidine in position 1402 (C1402) of 16S rRNA. The protein is Ribosomal RNA small subunit methyltransferase H of Citrifermentans bemidjiense (strain ATCC BAA-1014 / DSM 16622 / JCM 12645 / Bem) (Geobacter bemidjiensis).